The chain runs to 523 residues: UDP-glucuronosyltransferase 2B16 (523 aa).

The first 16 residues, 1–16, serve as a signal peptide directing secretion; the sequence is LLLLLQLSCCFSSGSC. Lysine 129 carries the N6-succinyllysine modification. A glycan (N-linked (GlcNAc...) asparagine) is linked at asparagine 309. Residues 487 to 503 form a helical membrane-spanning segment; the sequence is VIGFLLACLTITTYLVI.

Belongs to the UDP-glycosyltransferase family.

The protein localises to the microsome membrane. Its subcellular location is the endoplasmic reticulum membrane. The enzyme catalyses glucuronate acceptor + UDP-alpha-D-glucuronate = acceptor beta-D-glucuronoside + UDP + H(+). Functionally, UDPGT is of major importance in the conjugation and subsequent elimination of potentially toxic xenobiotics and endogenous compounds. Acts on small phenolic agents such as 2-beta-naphthol and 4-methylumbelliferone as well as bulky phenolic compounds like 2-hydroxy- and 4-hydroxybiphenyl. In contrast to 2B13 it is active toward 4-hydroxyesterone. This Oryctolagus cuniculus (Rabbit) protein is UDP-glucuronosyltransferase 2B16 (UGT2B16).